A 267-amino-acid polypeptide reads, in one-letter code: MKKMILIAGPCVIESKDLIFKVAKQLKNFNENPNIEFYFKSSFDKANRTSINSFRGPGLEEGLKILQSVKDEFGMKILTDIHESNQANPVSEVADVLQIPAFLCRQTDLLVAAAKTKAKVNIKKGQFLNPSDIKYSVKKVLQTRGIEDEGYEAAQKNGVFVAERGASFGYGNLVVDMRSLVIMREFAPVIFDATHSVQMPGAAGGSSGGKSEFVEPLARAAAAVGIDGFFFETHINPCEALCDGPNMLDLTRLKNCVNTLLEIQNII.

Belongs to the KdsA family.

It is found in the cytoplasm. The enzyme catalyses D-arabinose 5-phosphate + phosphoenolpyruvate + H2O = 3-deoxy-alpha-D-manno-2-octulosonate-8-phosphate + phosphate. It functions in the pathway carbohydrate biosynthesis; 3-deoxy-D-manno-octulosonate biosynthesis; 3-deoxy-D-manno-octulosonate from D-ribulose 5-phosphate: step 2/3. The protein operates within bacterial outer membrane biogenesis; lipopolysaccharide biosynthesis. This Campylobacter jejuni subsp. doylei (strain ATCC BAA-1458 / RM4099 / 269.97) protein is 2-dehydro-3-deoxyphosphooctonate aldolase.